Reading from the N-terminus, the 130-residue chain is Classical arabinogalactan protein 7 (130 aa).

The first 21 residues, 1–21 (MNSKIIEAFFIVALFTTSCLA), serve as a signal peptide directing secretion. At Gln22 the chain carries Pyrrolidone carboxylic acid. Residues 22–108 (QAPAPSPTTT…DASAPPPNAA (87 aa)) are disordered. A 4-hydroxyproline mark is found at Pro24, Pro26, Pro28, Pro35, and Pro36. Pro24, Pro26, Pro28, Pro35, and Pro36 each carry an O-linked (Ara...) hydroxyproline glycan. Residues 33–68 (TPPPVATPPPAATPAPTTTPPPAVSPAPTSSPPSSA) show a composition bias toward pro residues. Residue Asn106 is the site of GPI-anchor amidated asparagine attachment. A propeptide spans 107–130 (AALTNKAFVVGSLVAAIIYAVVLA) (removed in mature form).

The protein belongs to the classical AGP family. In terms of processing, O-glycosylated on hydroxyprolines; noncontiguous hydroxylproline residues are glycosylated with arabinogalactan.

It localises to the cell membrane. Proteoglycan that seems to be implicated in diverse developmental roles such as differentiation, cell-cell recognition, embryogenesis and programmed cell death. The polypeptide is Classical arabinogalactan protein 7 (AGP7) (Arabidopsis thaliana (Mouse-ear cress)).